Consider the following 324-residue polypeptide: Elongation factor Ts, mitochondrial (324 aa).

The N-terminal 44 residues, 1–44, are a transit peptide targeting the mitochondrion; that stretch reads MSLLRSLRFFPVACTGRSARAVLLQPSQPWHTLHAGPSLSSSAS. Residues lysine 75 and lysine 132 each carry the N6-succinyllysine modification. At serine 269 the chain carries Phosphoserine.

Belongs to the EF-Ts family.

It localises to the mitochondrion. Associates with the EF-Tu.GDP complex and induces the exchange of GDP to GTP. It remains bound to the aminoacyl-tRNA.EF-Tu.GTP complex up to the GTP hydrolysis stage on the ribosome. In Rattus norvegicus (Rat), this protein is Elongation factor Ts, mitochondrial (Tsfm).